The chain runs to 616 residues: Chaperone protein HscA (616 aa).

Belongs to the heat shock protein 70 family.

Its function is as follows. Chaperone involved in the maturation of iron-sulfur cluster-containing proteins. Has a low intrinsic ATPase activity which is markedly stimulated by HscB. Involved in the maturation of IscU. This Cronobacter sakazakii (strain ATCC BAA-894) (Enterobacter sakazakii) protein is Chaperone protein HscA.